The chain runs to 583 residues: 2-succinyl-5-enolpyruvyl-6-hydroxy-3-cyclohexene-1-carboxylate synthase (583 aa).

This sequence belongs to the TPP enzyme family. MenD subfamily. Homodimer. Mg(2+) serves as cofactor. Requires Mn(2+) as cofactor. It depends on thiamine diphosphate as a cofactor.

It catalyses the reaction isochorismate + 2-oxoglutarate + H(+) = 5-enolpyruvoyl-6-hydroxy-2-succinyl-cyclohex-3-ene-1-carboxylate + CO2. It functions in the pathway quinol/quinone metabolism; 1,4-dihydroxy-2-naphthoate biosynthesis; 1,4-dihydroxy-2-naphthoate from chorismate: step 2/7. The protein operates within cofactor biosynthesis; phylloquinone biosynthesis. Functionally, catalyzes the thiamine diphosphate-dependent decarboxylation of 2-oxoglutarate and the subsequent addition of the resulting succinic semialdehyde-thiamine pyrophosphate anion to isochorismate to yield 2-succinyl-5-enolpyruvyl-6-hydroxy-3-cyclohexene-1-carboxylate (SEPHCHC). The protein is 2-succinyl-5-enolpyruvyl-6-hydroxy-3-cyclohexene-1-carboxylate synthase of Nostoc sp. (strain PCC 7120 / SAG 25.82 / UTEX 2576).